The primary structure comprises 203 residues: Small ribosomal subunit protein uS2 (203 aa).

The protein belongs to the universal ribosomal protein uS2 family.

This is Small ribosomal subunit protein uS2 from Methanopyrus kandleri (strain AV19 / DSM 6324 / JCM 9639 / NBRC 100938).